We begin with the raw amino-acid sequence, 513 residues long: ATP synthase subunit alpha (513 aa).

Residue 169-176 (GDRQCGKT) participates in ATP binding.

The protein belongs to the ATPase alpha/beta chains family. F-type ATPases have 2 components, CF(1) - the catalytic core - and CF(0) - the membrane proton channel. CF(1) has five subunits: alpha(3), beta(3), gamma(1), delta(1), epsilon(1). CF(0) has three main subunits: a(1), b(2) and c(9-12). The alpha and beta chains form an alternating ring which encloses part of the gamma chain. CF(1) is attached to CF(0) by a central stalk formed by the gamma and epsilon chains, while a peripheral stalk is formed by the delta and b chains.

It localises to the cell inner membrane. It carries out the reaction ATP + H2O + 4 H(+)(in) = ADP + phosphate + 5 H(+)(out). In terms of biological role, produces ATP from ADP in the presence of a proton gradient across the membrane. The alpha chain is a regulatory subunit. This chain is ATP synthase subunit alpha, found in Burkholderia mallei (strain NCTC 10229).